The primary structure comprises 260 residues: Indole-3-glycerol phosphate synthase (260 aa).

The protein belongs to the TrpC family.

The catalysed reaction is 1-(2-carboxyphenylamino)-1-deoxy-D-ribulose 5-phosphate + H(+) = (1S,2R)-1-C-(indol-3-yl)glycerol 3-phosphate + CO2 + H2O. It participates in amino-acid biosynthesis; L-tryptophan biosynthesis; L-tryptophan from chorismate: step 4/5. The chain is Indole-3-glycerol phosphate synthase from Neisseria gonorrhoeae (strain NCCP11945).